The following is a 242-amino-acid chain: Probable transcriptional regulatory protein STH1004 (242 aa).

This sequence belongs to the TACO1 family.

It localises to the cytoplasm. This chain is Probable transcriptional regulatory protein STH1004, found in Symbiobacterium thermophilum (strain DSM 24528 / JCM 14929 / IAM 14863 / T).